The sequence spans 290 residues: Putative tyrosine recombinase TTE1313 (290 aa).

In terms of domain architecture, Core-binding (CB) spans 1 to 85; that stretch reads MAESVVGEFL…SIKAFYHYLF (85 aa). The region spanning 106-290 is the Tyr recombinase domain; it reads KEPVTLTVEQ…EVYNKFHPRA (185 aa). Arg239 is an active-site residue. Residue Tyr283 is the O-(3'-phospho-DNA)-tyrosine intermediate of the active site.

The protein belongs to the 'phage' integrase family.

The protein resides in the cytoplasm. Functionally, site-specific tyrosine recombinase, which acts by catalyzing the cutting and rejoining of the recombining DNA molecules. The protein is Putative tyrosine recombinase TTE1313 of Caldanaerobacter subterraneus subsp. tengcongensis (strain DSM 15242 / JCM 11007 / NBRC 100824 / MB4) (Thermoanaerobacter tengcongensis).